The chain runs to 191 residues: Transposon Tn1546 resolvase (191 aa).

A Resolvase/invertase-type recombinase catalytic domain is found at 2–138 (RKIGYIRVSS…EGIELAKKEG (137 aa)). Serine 10 (O-(5'-phospho-DNA)-serine intermediate) is an active-site residue. A DNA-binding region (H-T-H motif) is located at residues 168 to 187 (VNQICEITNVSRASLYRKLS).

This sequence belongs to the site-specific recombinase resolvase family.

Functionally, resolvase catalyzes the resolution (a site-specific recombination) of the cointegrated replicon to yield the final transposition products. In Enterococcus faecium (Streptococcus faecium), this protein is Transposon Tn1546 resolvase.